We begin with the raw amino-acid sequence, 259 residues long: GTP cyclohydrolase FolE2 (259 aa).

It belongs to the GTP cyclohydrolase IV family.

It catalyses the reaction GTP + H2O = 7,8-dihydroneopterin 3'-triphosphate + formate + H(+). Its pathway is cofactor biosynthesis; 7,8-dihydroneopterin triphosphate biosynthesis; 7,8-dihydroneopterin triphosphate from GTP: step 1/1. In terms of biological role, converts GTP to 7,8-dihydroneopterin triphosphate. This Thermotoga petrophila (strain ATCC BAA-488 / DSM 13995 / JCM 10881 / RKU-1) protein is GTP cyclohydrolase FolE2.